The chain runs to 971 residues: Exportin-2 (971 aa).

Residues 29–102 (AEKFLESVEG…KANIVNLMLT (74 aa)) form the Importin N-terminal domain.

Belongs to the XPO2/CSE1 family. Interacts with cftr. In terms of tissue distribution, detected in larval gut, liver, exocrine pancreas and part of the brain and retina at 96 hpf.

It localises to the cytoplasm. Its subcellular location is the nucleus. It is found in the apical cell membrane. The protein localises to the basal cell membrane. The protein resides in the lateral cell membrane. In terms of biological role, export receptor for importin alpha. Mediates importin-alpha re-export from the nucleus to the cytoplasm after import substrates have been released into the nucleoplasm. Negatively regulates fluid secretion and plays a role in fluid homeostasis by down-regulating cftr activity. The sequence is that of Exportin-2 (cse1l) from Danio rerio (Zebrafish).